Consider the following 558-residue polypeptide: Phosphatidylserine lipase ABHD16A (558 aa).

2 helical membrane passes run isoleucine 60–phenylalanine 80 and valine 93–leucine 113. The Cytoplasmic portion of the chain corresponds to arginine 114–leucine 558. Residues leucine 281 to leucine 407 enclose the AB hydrolase-1 domain. Active-site charge relay system residues include serine 355, aspartate 430, and histidine 507.

It belongs to the AB hydrolase superfamily. ABHD16 family.

Its subcellular location is the membrane. It carries out the reaction 1-heptadecanoyl-2-(5Z,8Z,11Z,14Z-eicosatetraenoyl)-sn-glycero-3-phosphoserine + H2O = 1-heptadecanoyl-sn-glycero-3-phosphoserine + (5Z,8Z,11Z,14Z)-eicosatetraenoate + H(+). The enzyme catalyses 1-hexadecanoyl-2-(9Z-octadecenoyl)-sn-glycero-3-phospho-L-serine + H2O = 1-hexadecanoyl-sn-glycero-3-phospho-L-serine + (9Z)-octadecenoate + H(+). The catalysed reaction is 1-octadecanoyl-2-(9Z,12Z-octadecadienoyl)-sn-glycero-3-phosphoserine + H2O = 1-octadecanoyl-sn-glycero-3-phosphoserine + (9Z,12Z)-octadecadienoate + H(+). It catalyses the reaction 1-heptadecanoyl-2-(5Z,8Z,11Z,14Z-eicosatetraenoyl)-sn-glycero-3-phosphocholine + H2O = 1-heptadecanoyl-sn-glycero-3-phosphocholine + (5Z,8Z,11Z,14Z)-eicosatetraenoate + H(+). It carries out the reaction 1-hexadecanoyl-2-(9Z-octadecenoyl)-sn-glycero-3-phosphoglycerol + H2O = 1-hexadecanoyl-sn-glycero-3-phosphoglycerol + (9Z)-octadecenoate + H(+). The enzyme catalyses 1-hexadecanoyl-2-(9Z-octadecenoyl)-sn-glycero-3-phospho-(1D-myo-inositol) + H2O = 1-hexadecanoyl-sn-glycero-3-phospho-(1D-myo-inositol) + (9Z)-octadecenoate + H(+). The catalysed reaction is 1-heptadecanoyl-2-(5Z,8Z,11Z,14Z-eicosatetraenoyl)-sn-glycero-3-phosphoethanolamine + H2O = 1-heptadecanoyl-sn-glycero-3-phosphoethanolamine + (5Z,8Z,11Z,14Z)-eicosatetraenoate + H(+). It catalyses the reaction 1-hexadecanoyl-2-(9Z-octadecenoyl)-sn-glycero-3-phospho-(1'-sn-glycerol) + H2O = 1-hexadecanoyl-sn-glycero-3-phospho-(1'-sn-glycerol) + (9Z)-octadecenoate + H(+). It carries out the reaction Hydrolyzes glycerol monoesters of long-chain fatty acids.. The enzyme catalyses 1-tetradecanoylglycerol + H2O = tetradecanoate + glycerol + H(+). The catalysed reaction is 2-hexadecanoylglycerol + H2O = glycerol + hexadecanoate + H(+). It catalyses the reaction 1-(9Z-octadecenoyl)-glycerol + H2O = glycerol + (9Z)-octadecenoate + H(+). It carries out the reaction 2-(9Z-octadecenoyl)-glycerol + H2O = glycerol + (9Z)-octadecenoate + H(+). The enzyme catalyses 2-(9Z,12Z-octadecadienoyl)-glycerol + H2O = (9Z,12Z)-octadecadienoate + glycerol + H(+). The catalysed reaction is 1-(5Z,8Z,11Z,14Z-eicosatetraenoyl)-glycerol + H2O = glycerol + (5Z,8Z,11Z,14Z)-eicosatetraenoate + H(+). It catalyses the reaction 2-(5Z,8Z,11Z,14Z-eicosatetraenoyl)-glycerol + H2O = glycerol + (5Z,8Z,11Z,14Z)-eicosatetraenoate + H(+). It carries out the reaction prostaglandin D2-1-glycerol ester + H2O = prostaglandin D2 + glycerol + H(+). The enzyme catalyses 2-glyceryl-15-deoxy-Delta(12,14)-prostaglandin J2 + H2O = 15-deoxy-Delta(12,14)-prostaglandin J2 + glycerol + H(+). The catalysed reaction is 1-(9Z,12Z-octadecadienoyl)-glycerol + H2O = (9Z,12Z)-octadecadienoate + glycerol + H(+). Inhibited by beta-lactone-based lipid inhibitors, such as beta-lactone palmostatin-B. Phosphatidylserine (PS) lipase that mediates the hydrolysis of phosphatidylserine to generate lysophosphatidylserine (LPS). LPS constitutes a class of signaling lipids that regulates immunological and neurological processes. Has no activity towards diacylglycerol, triacylglycerol or lysophosphatidylserine lipase. Also has monoacylglycerol lipase activity, with preference for 1-(9Z,12Z-octadecadienoyl)-glycerol (1-LG) and 2-glyceryl-15-deoxy-Delta(12,14)-prostaglandin J2 (15d-PGJ(2)-G). The sequence is that of Phosphatidylserine lipase ABHD16A from Homo sapiens (Human).